We begin with the raw amino-acid sequence, 427 residues long: 3-phosphoshikimate 1-carboxyvinyltransferase (427 aa).

Positions 22, 23, and 27 each coordinate 3-phosphoshikimate. Lys22 provides a ligand contact to phosphoenolpyruvate. Phosphoenolpyruvate-binding residues include Gly96 and Arg124. 3-phosphoshikimate contacts are provided by Ser169, Ser170, Gln171, Ser197, Asp313, Asn336, and Lys340. Gln171 is a binding site for phosphoenolpyruvate. The active-site Proton acceptor is the Asp313. Phosphoenolpyruvate contacts are provided by Arg344, Arg386, and Lys411.

It belongs to the EPSP synthase family. In terms of assembly, monomer.

The protein resides in the cytoplasm. It carries out the reaction 3-phosphoshikimate + phosphoenolpyruvate = 5-O-(1-carboxyvinyl)-3-phosphoshikimate + phosphate. It functions in the pathway metabolic intermediate biosynthesis; chorismate biosynthesis; chorismate from D-erythrose 4-phosphate and phosphoenolpyruvate: step 6/7. In terms of biological role, catalyzes the transfer of the enolpyruvyl moiety of phosphoenolpyruvate (PEP) to the 5-hydroxyl of shikimate-3-phosphate (S3P) to produce enolpyruvyl shikimate-3-phosphate and inorganic phosphate. In Salmonella schwarzengrund (strain CVM19633), this protein is 3-phosphoshikimate 1-carboxyvinyltransferase.